Reading from the N-terminus, the 309-residue chain is ATP synthase gamma chain (309 aa).

This sequence belongs to the ATPase gamma chain family. In terms of assembly, F-type ATPases have 2 components, CF(1) - the catalytic core - and CF(0) - the membrane proton channel. CF(1) has five subunits: alpha(3), beta(3), gamma(1), delta(1), epsilon(1). CF(0) has three main subunits: a, b and c.

It is found in the cell membrane. Produces ATP from ADP in the presence of a proton gradient across the membrane. The gamma chain is believed to be important in regulating ATPase activity and the flow of protons through the CF(0) complex. The sequence is that of ATP synthase gamma chain from Salinispora arenicola (strain CNS-205).